A 422-amino-acid chain; its full sequence is DNA-binding transcriptional activator AdeR (422 aa).

Belongs to the CdaR family.

In terms of biological role, activates ald expression in response to alanine availability and is important for normal sporulation in B.subtilis. The chain is DNA-binding transcriptional activator AdeR from Bacillus subtilis (strain 168).